The primary structure comprises 357 residues: UDP-N-acetylglucosamine 2-epimerase homolog (357 aa).

This sequence belongs to the UDP-N-acetylglucosamine 2-epimerase family.

The polypeptide is UDP-N-acetylglucosamine 2-epimerase homolog (Methanococcus maripaludis (strain DSM 14266 / JCM 13030 / NBRC 101832 / S2 / LL)).